Reading from the N-terminus, the 200-residue chain is Small ribosomal subunit protein uS4 (200 aa).

The tract at residues 22-42 (TGKELEKRPYAPGPHGPNQRK) is disordered. The S4 RNA-binding domain occupies 92–152 (ARLDNLVYRM…EKSRNLAVIK (61 aa)).

The protein belongs to the universal ribosomal protein uS4 family. As to quaternary structure, part of the 30S ribosomal subunit. Contacts protein S5. The interaction surface between S4 and S5 is involved in control of translational fidelity.

Functionally, one of the primary rRNA binding proteins, it binds directly to 16S rRNA where it nucleates assembly of the body of the 30S subunit. With S5 and S12 plays an important role in translational accuracy. This Bacillus cytotoxicus (strain DSM 22905 / CIP 110041 / 391-98 / NVH 391-98) protein is Small ribosomal subunit protein uS4.